Here is a 20-residue protein sequence, read N- to C-terminus: Apidaecin 3+ (20 aa).

The segment at 1-20 is disordered; the sequence is GKPSRPRPAPIQPRPPHPRL.

The protein belongs to the apidaecin family.

The protein localises to the secreted. Its function is as follows. Antimicrobial peptide active against many Gram-negative enterobacterial and plant-associated bacterial species. Not active against other bacterial species like H.pylori, P.mirabilis, B.pertussis or N.gonorrhoeae. Among others, also active against S.typhi. In terms of biological role, not active against S.typhi. The protein is Apidaecin 3+ of Pimpla disparis (Parasitic wasp).